The sequence spans 189 residues: MDESLADLRQELLALLCRDAYRAGDFTLSSGQKSQYYINCKPVTLSARGAYLVGRLFLEQLAPEAVAVAGLTLGADPLVVAVSVLSNLAGQDRAALIVRKEAKGHGTMSFIEGPPLPQGAVVTVLEDVITTGGSALKAVGRLQEAGYVVNEVLGIVDRQGGGAAAFAAQGIPLRSLFQISDLEAYLNRT.

Residues arginine 99, lysine 100, lysine 103, histidine 105, and 126 to 134 each bind 5-phospho-alpha-D-ribose 1-diphosphate; that span reads EDVITTGGS. Orotate is bound by residues threonine 130 and arginine 158.

The protein belongs to the purine/pyrimidine phosphoribosyltransferase family. PyrE subfamily. Homodimer. Requires Mg(2+) as cofactor.

The enzyme catalyses orotidine 5'-phosphate + diphosphate = orotate + 5-phospho-alpha-D-ribose 1-diphosphate. It participates in pyrimidine metabolism; UMP biosynthesis via de novo pathway; UMP from orotate: step 1/2. In terms of biological role, catalyzes the transfer of a ribosyl phosphate group from 5-phosphoribose 1-diphosphate to orotate, leading to the formation of orotidine monophosphate (OMP). The polypeptide is Orotate phosphoribosyltransferase (Thermosynechococcus vestitus (strain NIES-2133 / IAM M-273 / BP-1)).